A 557-amino-acid polypeptide reads, in one-letter code: Aerobic glycerol-3-phosphate dehydrogenase (557 aa).

21–49 (DLVIIGGGITGAGIALDASERGMKVALVE) serves as a coordination point for FAD.

It belongs to the FAD-dependent glycerol-3-phosphate dehydrogenase family. FAD is required as a cofactor.

It is found in the cytoplasm. It catalyses the reaction a quinone + sn-glycerol 3-phosphate = dihydroxyacetone phosphate + a quinol. It participates in polyol metabolism; glycerol degradation via glycerol kinase pathway; glycerone phosphate from sn-glycerol 3-phosphate (aerobic route): step 1/1. The protein is Aerobic glycerol-3-phosphate dehydrogenase (glpD) of Staphylococcus aureus (strain bovine RF122 / ET3-1).